Reading from the N-terminus, the 452-residue chain is Ketoisovalerate reductase BEA2 (452 aa).

An NADP(+)-binding site is contributed by 70-75 (GPGNIG). Lys285 (proton donor) is an active-site residue. Substrate contacts are provided by Asn289, Asn293, and Ser393. Glu405 contributes to the NADP(+) binding site.

It belongs to the ketopantoate reductase family.

It carries out the reaction (R)-2-hydroxy-3-methylbutanoate + NADP(+) = 3-methyl-2-oxobutanoate + NADPH + H(+). Ketoisovalerate reductase; part of the gene cluster that mediates the biosynthesis of beauvericin (BEA), a non-ribosomal cyclic hexadepsipeptide that shows antibiotic, antifungal, insecticidal, and cancer cell antiproliferative and antihaptotactic activity. Ketoisovalerate reductase BEA2 catalyzes the NADPH-specific reduction of ketoisovaleric acid to hydroxyisovalerate, a precursor for beauvericin biosynthesis. The nonribosomal cyclodepsipeptide synthetase BEA1 then catalyzes the formation of beauvericin via condensation and cyclization of 3 dipeptidol monomers, each composed of one unit of hydroxyisovalerate and one unit of N-methyl-phenylalanine. This is Ketoisovalerate reductase BEA2 from Gibberella fujikuroi (strain CBS 195.34 / IMI 58289 / NRRL A-6831) (Bakanae and foot rot disease fungus).